Reading from the N-terminus, the 256-residue chain is Pyrroloquinoline-quinone synthase (256 aa).

This sequence belongs to the PqqC family.

The catalysed reaction is 6-(2-amino-2-carboxyethyl)-7,8-dioxo-1,2,3,4,7,8-hexahydroquinoline-2,4-dicarboxylate + 3 O2 = pyrroloquinoline quinone + 2 H2O2 + 2 H2O + H(+). The protein operates within cofactor biosynthesis; pyrroloquinoline quinone biosynthesis. Functionally, ring cyclization and eight-electron oxidation of 3a-(2-amino-2-carboxyethyl)-4,5-dioxo-4,5,6,7,8,9-hexahydroquinoline-7,9-dicarboxylic-acid to PQQ. The protein is Pyrroloquinoline-quinone synthase of Rhizobium meliloti (strain 1021) (Ensifer meliloti).